The sequence spans 155 residues: Ribosome maturation factor RimP (155 aa).

This sequence belongs to the RimP family.

It is found in the cytoplasm. Functionally, required for maturation of 30S ribosomal subunits. The sequence is that of Ribosome maturation factor RimP from Listeria monocytogenes serovar 1/2a (strain ATCC BAA-679 / EGD-e).